We begin with the raw amino-acid sequence, 187 residues long: Interferon alpha-1/2 (187 aa).

A signal peptide spans 1 to 23 (MALPCSFSVALVLLSCHSLCCLA). 2 disulfides stabilise this stretch: Cys-24–Cys-122 and Cys-52–Cys-160. N-linked (GlcNAc...) asparagine glycosylation is present at Asn-101.

The protein belongs to the alpha/beta interferon family.

It is found in the secreted. Its function is as follows. Produced by macrophages, IFN-alpha have antiviral activities. Interferon stimulates the production of two enzymes: a protein kinase and an oligoadenylate synthetase. The chain is Interferon alpha-1/2 from Canis lupus familiaris (Dog).